Reading from the N-terminus, the 198-residue chain is Recombination protein RecR (198 aa).

The C4-type zinc-finger motif lies at 57–72 (CSVCHNITDTDPCRIC). In terms of domain architecture, Toprim spans 80–175 (SVICVVQDAK…KVTRIAHGLP (96 aa)).

The protein belongs to the RecR family.

Functionally, may play a role in DNA repair. It seems to be involved in an RecBC-independent recombinational process of DNA repair. It may act with RecF and RecO. The sequence is that of Recombination protein RecR from Halalkalibacterium halodurans (strain ATCC BAA-125 / DSM 18197 / FERM 7344 / JCM 9153 / C-125) (Bacillus halodurans).